A 677-amino-acid polypeptide reads, in one-letter code: Protein hook (677 aa).

The Calponin-homology (CH) domain maps to 6–123 (NEMYYSLLEW…RLLQLVLGCA (118 aa)). 2 coiled-coil regions span residues 135 to 436 (EIMC…KCGH) and 478 to 588 (QTAL…AKEV).

It belongs to the hook family. In terms of assembly, homodimer. Interacts with microtubules via its N-terminus.

The protein resides in the cytoplasm. Its subcellular location is the cytoskeleton. It is found in the endosome. It localises to the synapse. Its function is as follows. Involved in endocytic trafficking by stabilizing organelles of the endocytic pathway. Probably acts as a cytoskeletal linker protein required to tether endosome vesicles to the cytoskeleton. Involved in modulation of endocytosis at stages required for down-regulation of membrane proteins that control synapse size. Not involved in synaptic vesicle recycling. Required in R7 cells for boss endocytosis into multivesicular bodies (MVBs). Has a role in regulating adult longevity. The chain is Protein hook from Drosophila pseudoobscura pseudoobscura (Fruit fly).